The primary structure comprises 542 residues: MARYVFITGGVVSSLGKGIAAAALAALLQARGYRVRIRKLDPYLNVDPGTMSPYQHGEVFVTDDGSETDLDLGHYERFTGRSANRHDNITTGRIYRNIIERERRGDYLGATVQVIPHVTDEIKNFITTGNEESDFVLCEIGGTVGDIEAMPFLEAIRQLHNELPRQSVVYMHLTLMPYISSAGELKTKPTQHSVKELQSVGIAPDILLVRADRPIPESERCKLSLFCNVRPSAVIQALDVSTIYDVPIAYHKEGLDSEILSAFGIDSAPEPKMDRWEDIAYRIHHPEGEVTIAIVGKYTGLKDAYKSLIEAVAHGGLANKVKVNIEWIEAEIFEKEDPALFLQKVHGILVPGAFGVRGSEGKIRAIQFARNHKIPFLGICFGMQLACIEAVRNLAGIENASSSEFCETKDSVVGLMTEWLKGDVFEKRTASGNLGGTMRLGAFIAQLKKDSHISKIYGTTSICERHRHRYEVNIHYKDILERFGFVFSGMSPDGVLPEAIEYNNHPWFIGVQYHPELKSRPFDPHPLFSSFIAATVEQSRLF.

An amidoligase domain region spans residues 1–265; that stretch reads MARYVFITGG…DSEILSAFGI (265 aa). Ser-13 provides a ligand contact to CTP. A UTP-binding site is contributed by Ser-13. 14-19 is an ATP binding site; sequence SLGKGI. Tyr-54 provides a ligand contact to L-glutamine. Asp-71 contributes to the ATP binding site. The Mg(2+) site is built by Asp-71 and Glu-139. Residues 146–148, 186–191, and Lys-222 each bind CTP; these read DIE and KTKPTQ. UTP is bound by residues 186–191 and Lys-222; that span reads KTKPTQ. The Glutamine amidotransferase type-1 domain maps to 291–541; the sequence is TIAIVGKYTG…IAATVEQSRL (251 aa). Ala-353 contacts L-glutamine. Cys-380 acts as the Nucleophile; for glutamine hydrolysis in catalysis. Residues 381–384, Glu-404, and Arg-469 contribute to the L-glutamine site; that span reads FGMQ. Active-site residues include His-514 and Glu-516.

This sequence belongs to the CTP synthase family. As to quaternary structure, homotetramer.

It catalyses the reaction UTP + L-glutamine + ATP + H2O = CTP + L-glutamate + ADP + phosphate + 2 H(+). The catalysed reaction is L-glutamine + H2O = L-glutamate + NH4(+). It carries out the reaction UTP + NH4(+) + ATP = CTP + ADP + phosphate + 2 H(+). The protein operates within pyrimidine metabolism; CTP biosynthesis via de novo pathway; CTP from UDP: step 2/2. With respect to regulation, allosterically activated by GTP, when glutamine is the substrate; GTP has no effect on the reaction when ammonia is the substrate. The allosteric effector GTP functions by stabilizing the protein conformation that binds the tetrahedral intermediate(s) formed during glutamine hydrolysis. Inhibited by the product CTP, via allosteric rather than competitive inhibition. Its function is as follows. Catalyzes the ATP-dependent amination of UTP to CTP with either L-glutamine or ammonia as the source of nitrogen. Regulates intracellular CTP levels through interactions with the four ribonucleotide triphosphates. The polypeptide is CTP synthase (Bartonella bacilliformis (strain ATCC 35685 / KC583 / Herrer 020/F12,63)).